The following is a 138-amino-acid chain: Large ribosomal subunit protein uL16 (138 aa).

This sequence belongs to the universal ribosomal protein uL16 family. Part of the 50S ribosomal subunit.

Its function is as follows. Binds 23S rRNA and is also seen to make contacts with the A and possibly P site tRNAs. The protein is Large ribosomal subunit protein uL16 of Nitrosomonas europaea (strain ATCC 19718 / CIP 103999 / KCTC 2705 / NBRC 14298).